The sequence spans 340 residues: Integral membrane protein SED5 (340 aa).

The Cytoplasmic portion of the chain corresponds to 1-319 (MNIKDRTSEF…KYFDRIKSNR (319 aa)). Residues 31–51 (RLQEKESENFANNTTGNGKSV) form a disordered region. Polar residues predominate over residues 39 to 51 (NFANNTTGNGKSV). Residues 146 to 173 (LNTQMKNISGSFKDVLEERQRLEMANKD) adopt a coiled-coil conformation. A disordered region spans residues 180-231 (TDTGHAPADDQTQSNHAADLTTYNNSNPFMTSLLDESSEKNNNSSNQGELSF). Residues 189–209 (DQTQSNHAADLTTYNNSNPFM) are compositionally biased toward polar residues. One can recognise a t-SNARE coiled-coil homology domain in the interval 249–311 (NVYLQERNRA…SGAQRELLKY (63 aa)). Residues 320–340 (WLAAKVFFIIFVFFVIWVLVN) form a helical; Anchor for type IV membrane protein membrane-spanning segment.

The protein belongs to the syntaxin family. Interacts with SLY1, STF1, SFB3 and GOS1.

The protein localises to the membrane. It is found in the golgi apparatus membrane. Functionally, required for vesicular transport between the endoplasmic reticulum and the Golgi complex. Acts as a target organelle soluble NSF attachment protein receptor (t-SNARE). This Saccharomyces cerevisiae (strain ATCC 204508 / S288c) (Baker's yeast) protein is Integral membrane protein SED5 (SED5).